A 346-amino-acid chain; its full sequence is Histidinol-phosphate aminotransferase (346 aa).

Position 209 is an N6-(pyridoxal phosphate)lysine (K209).

It belongs to the class-II pyridoxal-phosphate-dependent aminotransferase family. Histidinol-phosphate aminotransferase subfamily. Homodimer. Requires pyridoxal 5'-phosphate as cofactor.

The catalysed reaction is L-histidinol phosphate + 2-oxoglutarate = 3-(imidazol-4-yl)-2-oxopropyl phosphate + L-glutamate. It functions in the pathway amino-acid biosynthesis; L-histidine biosynthesis; L-histidine from 5-phospho-alpha-D-ribose 1-diphosphate: step 7/9. This is Histidinol-phosphate aminotransferase from Vibrio cholerae serotype O1 (strain ATCC 39541 / Classical Ogawa 395 / O395).